Here is a 152-residue protein sequence, read N- to C-terminus: Ribonuclease H (152 aa).

The RNase H type-1 domain occupies 1–142 (MGSKVVIYTD…ADKLAVQGRE (142 aa)). Positions 10, 48, 70, and 134 each coordinate Mg(2+).

The protein belongs to the RNase H family. In terms of assembly, monomer. It depends on Mg(2+) as a cofactor.

It localises to the cytoplasm. The catalysed reaction is Endonucleolytic cleavage to 5'-phosphomonoester.. Endonuclease that specifically degrades the RNA of RNA-DNA hybrids. The sequence is that of Ribonuclease H from Rickettsia massiliae (strain Mtu5).